A 763-amino-acid chain; its full sequence is Amine oxidase [copper-containing] 3 (763 aa).

Topologically, residues 1–5 (MNQKT) are cytoplasmic. The helical; Signal-anchor for type II membrane protein transmembrane segment at 6–26 (ILVLLILAVITIFALVCVLLV) threads the bilayer. Over 27–763 (GRGGDGGEPS…AFSHGGFSHN (737 aa)) the chain is Extracellular. Residue Ser43 is glycosylated (O-linked (GalNAc...) serine). Asn137 carries an N-linked (GlcNAc...) asparagine glycan. A disulfide bond links Cys198 and Cys199. The O-linked (GalNAc...) threonine glycan is linked to Thr212. 2 N-linked (GlcNAc...) asparagine glycosylation sites follow: Asn232 and Asn294. Asp386 functions as the Proton acceptor in the catalytic mechanism. Cys404 and Cys430 are oxidised to a cystine. The active-site Schiff-base intermediate with substrate; via topaquinone is Tyr471. Tyr471 bears the 2',4',5'-topaquinone mark. Cu(2+) is bound by residues His520 and His522. 4 residues coordinate Ca(2+): Asp529, Leu530, Asp531, and Glu572. Asn592 carries an N-linked (GlcNAc...) (complex) asparagine glycan. Asn618 carries an N-linked (GlcNAc...) asparagine glycan. The Ca(2+) site is built by Glu641, Phe663, and Asn665. N-linked (GlcNAc...) asparagine glycosylation is present at Asn666. The Ca(2+) site is built by Glu667, Asp673, and Leu674. Thr679 is a glycosylation site (O-linked (GlcNAc) threonine). Position 684 (His684) interacts with Cu(2+). Cys734 and Cys741 are oxidised to a cystine.

Belongs to the copper/topaquinone oxidase family. Homodimer; disulfide-linked. Can heterodimerize with isoform 2 leading to reduced surface expression. Probably forms heterodimers with AOC2. Cu(2+) is required as a cofactor. Ca(2+) serves as cofactor. Requires L-topaquinone as cofactor. Topaquinone (TPQ) is generated by copper-dependent autoxidation of a specific tyrosyl residue. In terms of processing, N- and O-glycosylated. As to expression, strongly expressed on the high endothelial venules of peripheral lymph nodes and on hepatic endothelia. Also highly expressed in appendix, lung and small intestine. Expressed also in adipose tissue, in bone marrow, colon, heart, kidney, ovary, pancreas, placenta, prostate, skeletal muscle, spleen and testis. Isoform 2 seems to be the predominant transcript in fetal kidneys, fetal cartilage and fetal tonsils. The highest relative expression of isoform 2 occurs in skeletal muscle, heart, pancreas, kidney, and lung.

Its subcellular location is the cell membrane. It carries out the reaction methylamine + O2 + H2O = formaldehyde + H2O2 + NH4(+). It catalyses the reaction benzylamine + O2 + H2O = benzaldehyde + H2O2 + NH4(+). The enzyme catalyses 2-phenylethylamine + O2 + H2O = 2-phenylacetaldehyde + H2O2 + NH4(+). Its function is as follows. Catalyzes the oxidative deamination of primary amines to the corresponding aldehydes with the concomitant production of hydrogen peroxide and ammonia. Has a preference for the primary monoamines methylamine and benzylamine. Could also act on 2-phenylethylamine but much less efficiently. At endothelial cells surface can also function as a cell adhesion protein that participates in lymphocyte extravasation and recirculation by mediating the binding of lymphocytes to peripheral lymph node vascular endothelial cells in an L-selectin-independent fashion. Has no semicarbazide-sensitive amine oxidase (SSAO) activity. This chain is Amine oxidase [copper-containing] 3, found in Homo sapiens (Human).